The sequence spans 116 residues: Large ribosomal subunit protein uL18 (116 aa).

Belongs to the universal ribosomal protein uL18 family. Part of the 50S ribosomal subunit; part of the 5S rRNA/L5/L18/L25 subcomplex. Contacts the 5S and 23S rRNAs.

Functionally, this is one of the proteins that bind and probably mediate the attachment of the 5S RNA into the large ribosomal subunit, where it forms part of the central protuberance. The sequence is that of Large ribosomal subunit protein uL18 from Shewanella halifaxensis (strain HAW-EB4).